Consider the following 1027-residue polypeptide: Protein translocase subunit SecA (1027 aa).

Residues Gln-143, 161 to 165, and Asp-661 contribute to the ATP site; that span reads GEGKT. The segment at 981–1027 is disordered; it reads EESGTSNADNAGDNGPQTVIAEKKPGRNDLCPCGSGKKYKNCHGQQP. Zn(2+) is bound by residues Cys-1011, Cys-1013, Cys-1022, and His-1023.

It belongs to the SecA family. As to quaternary structure, monomer and homodimer. Part of the essential Sec protein translocation apparatus which comprises SecA, SecYEG and auxiliary proteins SecDF. Other proteins may also be involved. Requires Zn(2+) as cofactor.

Its subcellular location is the cell inner membrane. It is found in the cytoplasm. The catalysed reaction is ATP + H2O + cellular proteinSide 1 = ADP + phosphate + cellular proteinSide 2.. Part of the Sec protein translocase complex. Interacts with the SecYEG preprotein conducting channel. Has a central role in coupling the hydrolysis of ATP to the transfer of proteins into and across the cell membrane, serving as an ATP-driven molecular motor driving the stepwise translocation of polypeptide chains across the membrane. This chain is Protein translocase subunit SecA, found in Chlorobium limicola (strain DSM 245 / NBRC 103803 / 6330).